A 576-amino-acid polypeptide reads, in one-letter code: Chaperonin CPN60-2, mitochondrial (576 aa).

A mitochondrion-targeting transit peptide spans 1-34 (MYRAAASLASKARQAGSSSAARQVGSRLAWSRNY).

Belongs to the chaperonin (HSP60) family.

It is found in the mitochondrion. Its function is as follows. Implicated in mitochondrial protein import and macromolecular assembly. May facilitate the correct folding of imported proteins. May also prevent misfolding and promote the refolding and proper assembly of unfolded polypeptides generated under stress conditions in the mitochondrial matrix. This chain is Chaperonin CPN60-2, mitochondrial (CPN60II), found in Zea mays (Maize).